A 106-amino-acid chain; its full sequence is MKKVVFFLLDFYRYGLSSFRQTLGMYGVCRYYPTCSQYCREAVQKHGIIHGLYLCLRRLMRCHPWGAAGWDPVPEKSNLGIKRTKKADHPLKKKVSLMRVMHLFFK.

This sequence belongs to the UPF0161 family.

It localises to the cell inner membrane. In terms of biological role, could be involved in insertion of integral membrane proteins into the membrane. The chain is Putative membrane protein insertion efficiency factor from Methylacidiphilum infernorum (isolate V4) (Methylokorus infernorum (strain V4)).